Here is a 239-residue protein sequence, read N- to C-terminus: Large ribosomal subunit protein uL2 (239 aa).

This sequence belongs to the universal ribosomal protein uL2 family.

The protein resides in the cytoplasm. In Encephalitozoon cuniculi (strain GB-M1) (Microsporidian parasite), this protein is Large ribosomal subunit protein uL2 (RPL8).